Consider the following 257-residue polypeptide: Aspartate/glutamate leucyltransferase (257 aa).

Belongs to the R-transferase family. Bpt subfamily.

The protein localises to the cytoplasm. It catalyses the reaction N-terminal L-glutamyl-[protein] + L-leucyl-tRNA(Leu) = N-terminal L-leucyl-L-glutamyl-[protein] + tRNA(Leu) + H(+). The catalysed reaction is N-terminal L-aspartyl-[protein] + L-leucyl-tRNA(Leu) = N-terminal L-leucyl-L-aspartyl-[protein] + tRNA(Leu) + H(+). In terms of biological role, functions in the N-end rule pathway of protein degradation where it conjugates Leu from its aminoacyl-tRNA to the N-termini of proteins containing an N-terminal aspartate or glutamate. The protein is Aspartate/glutamate leucyltransferase of Phenylobacterium zucineum (strain HLK1).